We begin with the raw amino-acid sequence, 552 residues long: Putative transport protein NT01EI_3867 (552 aa).

The next 5 helical transmembrane spans lie at 4–24, 26–46, 65–85, 90–112, and 158–178; these read IALT…IGNW, IYGV…VGHF, FGLI…FFSS, GLRL…AAIH, and MGYA…IWLI. RCK C-terminal domains lie at 191 to 276 and 279 to 361; these read RDFD…VIGE and DTSL…IVGN. 6 helical membrane passes run 371-391, 403-425, 439-459, 464-484, 493-513, and 530-550; these read MLPV…PLFI, AGGP…LYWF, IVLF…DTLL, VTWI…AALL, YLTL…LAFA, and VYPL…LLFW.

It belongs to the AAE transporter (TC 2.A.81) family. YidE subfamily.

Its subcellular location is the cell membrane. The polypeptide is Putative transport protein NT01EI_3867 (Edwardsiella ictaluri (strain 93-146)).